The following is a 368-amino-acid chain: tRNA-specific 2-thiouridylase MnmA (368 aa).

ATP contacts are provided by residues 14 to 21 (AMSGGVDS) and Leu-40. Cys-108 serves as the catalytic Nucleophile. Residues Cys-108 and Cys-204 are joined by a disulfide bond. Gly-132 provides a ligand contact to ATP. Residues 154–156 (KDQ) are interaction with tRNA. The active-site Cysteine persulfide intermediate is the Cys-204.

Belongs to the MnmA/TRMU family.

It localises to the cytoplasm. It catalyses the reaction S-sulfanyl-L-cysteinyl-[protein] + uridine(34) in tRNA + AH2 + ATP = 2-thiouridine(34) in tRNA + L-cysteinyl-[protein] + A + AMP + diphosphate + H(+). Functionally, catalyzes the 2-thiolation of uridine at the wobble position (U34) of tRNA, leading to the formation of s(2)U34. The protein is tRNA-specific 2-thiouridylase MnmA of Rickettsia canadensis (strain McKiel).